The primary structure comprises 712 residues: Cadherin-13 (712 aa).

The signal sequence occupies residues 1 to 22 (MQHKTQLTLSFLLSQVLLLACA). Residues 23-138 (EDLECTPGFQ…GNLGIPRQKR (116 aa)) constitute a propeptide that is removed on maturation. N86 carries N-linked (GlcNAc...) asparagine glycosylation. 5 Cadherin domains span residues 143–245 (TPIL…RPMF), 246–363 (KEGP…PPEF), 364–477 (TKKE…GPVF), 478–585 (HPNP…VPSL), and 586–680 (YPTL…LQVC). Residues N382, N500, N530, N638, and N671 are each glycosylated (N-linked (GlcNAc...) asparagine). Residue D693 is the site of GPI-anchor amidated aspartate attachment. Residues 694–712 (ALHISMTLILLSLFSLFCL) constitute a propeptide, removed in mature form.

By contrast to classical cadherins, homodimerization in trans is not mediated by cadherin EC1 domain strand-swapping, but instead through a homophilic adhesive interface which joins two elongated EC1-EC2 domains through a region near their Ca2+-binding sites to form a tetrahedral, X-like shape. In terms of tissue distribution, neural tissues. Also found in muscles; kidney and retina.

Its subcellular location is the cell membrane. It is found in the cytoplasm. Its function is as follows. Cadherins are calcium-dependent cell adhesion proteins. They preferentially interact with themselves in a homophilic manner in connecting cells; cadherins may thus contribute to the sorting of heterogeneous cell types. May act as a negative regulator of neural cell growth. This Gallus gallus (Chicken) protein is Cadherin-13 (CDH13).